We begin with the raw amino-acid sequence, 192 residues long: uncharacterized protein (192 aa).

The chain crosses the membrane as a helical; Signal-anchor span at residues 7–29 (FIHSISGGSSLLSASEVFASAFF). Residues 51-67 (YFLCVLVSTFLNSLVII) form a helical membrane-spanning segment.

It is found in the membrane. This is an uncharacterized protein from Saccharomyces cerevisiae (strain ATCC 204508 / S288c) (Baker's yeast).